We begin with the raw amino-acid sequence, 161 residues long: uncharacterized protein (161 aa).

Residues 16 to 36 traverse the membrane as a helical segment; that stretch reads KLGLVVAIFFFMMGTTVVVLY.

It is found in the membrane. This is an uncharacterized protein from Encephalitozoon cuniculi (strain GB-M1) (Microsporidian parasite).